Here is a 392-residue protein sequence, read N- to C-terminus: 8-amino-7-oxononanoate synthase (392 aa).

108-109 (GF) is a binding site for pyridoxal 5'-phosphate. Histidine 133 contacts substrate. Pyridoxal 5'-phosphate-binding positions include serine 180, 205–208 (DDAH), and 236–239 (TLSK). Lysine 239 carries the post-translational modification N6-(pyridoxal phosphate)lysine. Threonine 353 is a binding site for substrate.

Belongs to the class-II pyridoxal-phosphate-dependent aminotransferase family. BioF subfamily. As to quaternary structure, homodimer. Pyridoxal 5'-phosphate serves as cofactor.

It carries out the reaction 6-carboxyhexanoyl-[ACP] + L-alanine + H(+) = (8S)-8-amino-7-oxononanoate + holo-[ACP] + CO2. Its pathway is cofactor biosynthesis; biotin biosynthesis. Functionally, catalyzes the decarboxylative condensation of pimeloyl-[acyl-carrier protein] and L-alanine to produce 8-amino-7-oxononanoate (AON), [acyl-carrier protein], and carbon dioxide. The protein is 8-amino-7-oxononanoate synthase of Bacillus pumilus (strain SAFR-032).